We begin with the raw amino-acid sequence, 109 residues long: Fluoride-specific ion channel FluC (109 aa).

3 helical membrane-spanning segments follow: residues 21 to 41 (FFLN…GFVI), 52 to 72 (ILLT…LFLY), and 83 to 103 (LFFY…AGFL).

This sequence belongs to the fluoride channel Fluc/FEX (TC 1.A.43) family.

Its subcellular location is the cell inner membrane. It catalyses the reaction fluoride(in) = fluoride(out). Functionally, fluoride-specific ion channel. Important for reducing fluoride concentration in the cell, thus reducing its toxicity. The sequence is that of Fluoride-specific ion channel FluC from Prochlorococcus marinus (strain MIT 9515).